Here is a 95-residue protein sequence, read N- to C-terminus: UPF0358 protein BA_4159/GBAA_4159/BAS3861 (95 aa).

The protein belongs to the UPF0358 family.

The sequence is that of UPF0358 protein BA_4159/GBAA_4159/BAS3861 from Bacillus anthracis.